A 101-amino-acid polypeptide reads, in one-letter code: Small ribosomal subunit protein uS14 (101 aa).

The disordered stretch occupies residues 36–72 (GTDESREAARAGIQRLPRDASPIRVRNRDGIDGRPRG). Positions 61-70 (RNRDGIDGRP) are enriched in basic and acidic residues.

This sequence belongs to the universal ribosomal protein uS14 family. Part of the 30S ribosomal subunit. Contacts proteins S3 and S10.

Binds 16S rRNA, required for the assembly of 30S particles and may also be responsible for determining the conformation of the 16S rRNA at the A site. This is Small ribosomal subunit protein uS14 from Clavibacter michiganensis subsp. michiganensis (strain NCPPB 382).